The chain runs to 240 residues: Probable phosphatase Athe_0620 (240 aa).

Zn(2+) contacts are provided by His8, His10, His16, His41, Glu74, His102, His132, Asp192, and His194.

The protein belongs to the PHP family. The cofactor is Zn(2+).

The polypeptide is Probable phosphatase Athe_0620 (Caldicellulosiruptor bescii (strain ATCC BAA-1888 / DSM 6725 / KCTC 15123 / Z-1320) (Anaerocellum thermophilum)).